The following is a 137-amino-acid chain: Large ribosomal subunit protein eL28 (137 aa).

Ser-2 carries the N-acetylserine modification. Glycyl lysine isopeptide (Lys-Gly) (interchain with G-Cter in SUMO2) cross-links involve residues Lys-58 and Lys-65. Ser-115 is modified (phosphoserine).

Belongs to the eukaryotic ribosomal protein eL28 family. As to quaternary structure, component of the large ribosomal subunit.

It is found in the cytoplasm. Component of the large ribosomal subunit. The ribosome is a large ribonucleoprotein complex responsible for the synthesis of proteins in the cell. In Mus musculus (Mouse), this protein is Large ribosomal subunit protein eL28 (Rpl28).